The sequence spans 225 residues: Thymidylate kinase (225 aa).

10-17 (GPEGAGKT) provides a ligand contact to ATP.

It belongs to the thymidylate kinase family.

It carries out the reaction dTMP + ATP = dTDP + ADP. Its function is as follows. Phosphorylation of dTMP to form dTDP in both de novo and salvage pathways of dTTP synthesis. The polypeptide is Thymidylate kinase (Geobacillus thermodenitrificans (strain NG80-2)).